Consider the following 378-residue polypeptide: tRNA-specific 2-thiouridylase MnmA (378 aa).

Residues 14-21 and leucine 40 each bind ATP; that span reads AMSGGVDS. The active-site Nucleophile is cysteine 109. An intrachain disulfide couples cysteine 109 to cysteine 208. Glycine 133 contacts ATP. The segment at 156–158 is interaction with tRNA; the sequence is KDQ. Residue cysteine 208 is the Cysteine persulfide intermediate of the active site.

This sequence belongs to the MnmA/TRMU family.

It is found in the cytoplasm. It carries out the reaction S-sulfanyl-L-cysteinyl-[protein] + uridine(34) in tRNA + AH2 + ATP = 2-thiouridine(34) in tRNA + L-cysteinyl-[protein] + A + AMP + diphosphate + H(+). Functionally, catalyzes the 2-thiolation of uridine at the wobble position (U34) of tRNA, leading to the formation of s(2)U34. The protein is tRNA-specific 2-thiouridylase MnmA of Streptomyces griseus subsp. griseus (strain JCM 4626 / CBS 651.72 / NBRC 13350 / KCC S-0626 / ISP 5235).